The sequence spans 599 residues: Probable acetolactate synthase large subunit (599 aa).

Glu47 is a thiamine diphosphate binding site. FAD is bound by residues Arg149, 258–279, and 301–320; these read HGTK…IGCR and DIDP…IVGD. The thiamine pyrophosphate binding stretch occupies residues 404–484; that stretch reads QNQMWMAHYF…VVICIFDNRT (81 aa). Residues Asp455 and Asn482 each coordinate Mg(2+).

Belongs to the TPP enzyme family. As to quaternary structure, dimer of large and small chains. It depends on Mg(2+) as a cofactor. Thiamine diphosphate serves as cofactor.

It carries out the reaction 2 pyruvate + H(+) = (2S)-2-acetolactate + CO2. It functions in the pathway amino-acid biosynthesis; L-isoleucine biosynthesis; L-isoleucine from 2-oxobutanoate: step 1/4. The protein operates within amino-acid biosynthesis; L-valine biosynthesis; L-valine from pyruvate: step 1/4. The polypeptide is Probable acetolactate synthase large subunit (ilvB) (Methanococcus aeolicus).